Reading from the N-terminus, the 151-residue chain is Transcriptional repressor NrdR (151 aa).

The segment at 3–34 (CPFCNAQDTKVIDSRLVSEGSQVRRRRSCNEC) is a zinc-finger region. An ATP-cone domain is found at 49-139 (PRLIKSDGRR…VYRSFKDVKE (91 aa)).

The protein belongs to the NrdR family. Zn(2+) is required as a cofactor.

Its function is as follows. Negatively regulates transcription of bacterial ribonucleotide reductase nrd genes and operons by binding to NrdR-boxes. The protein is Transcriptional repressor NrdR of Psychromonas ingrahamii (strain DSM 17664 / CCUG 51855 / 37).